We begin with the raw amino-acid sequence, 268 residues long: Octanoyltransferase (268 aa).

Residues 47-243 (PETPDQVWLV…ALCEVLAAHE (197 aa)) form the BPL/LPL catalytic domain. Substrate is bound by residues 87 to 94 (RGGQITYH), 159 to 161 (ALG), and 172 to 174 (GVS). Cys190 (acyl-thioester intermediate) is an active-site residue.

The protein belongs to the LipB family.

It localises to the cytoplasm. It carries out the reaction octanoyl-[ACP] + L-lysyl-[protein] = N(6)-octanoyl-L-lysyl-[protein] + holo-[ACP] + H(+). It participates in protein modification; protein lipoylation via endogenous pathway; protein N(6)-(lipoyl)lysine from octanoyl-[acyl-carrier-protein]: step 1/2. In terms of biological role, catalyzes the transfer of endogenously produced octanoic acid from octanoyl-acyl-carrier-protein onto the lipoyl domains of lipoate-dependent enzymes. Lipoyl-ACP can also act as a substrate although octanoyl-ACP is likely to be the physiological substrate. The sequence is that of Octanoyltransferase from Cupriavidus necator (strain ATCC 17699 / DSM 428 / KCTC 22496 / NCIMB 10442 / H16 / Stanier 337) (Ralstonia eutropha).